A 158-amino-acid polypeptide reads, in one-letter code: NAD(P)H-quinone oxidoreductase subunit J, chloroplastic (158 aa).

It belongs to the complex I 30 kDa subunit family. As to quaternary structure, NDH is composed of at least 16 different subunits, 5 of which are encoded in the nucleus.

The protein localises to the plastid. The protein resides in the chloroplast thylakoid membrane. It catalyses the reaction a plastoquinone + NADH + (n+1) H(+)(in) = a plastoquinol + NAD(+) + n H(+)(out). It carries out the reaction a plastoquinone + NADPH + (n+1) H(+)(in) = a plastoquinol + NADP(+) + n H(+)(out). Its function is as follows. NDH shuttles electrons from NAD(P)H:plastoquinone, via FMN and iron-sulfur (Fe-S) centers, to quinones in the photosynthetic chain and possibly in a chloroplast respiratory chain. The immediate electron acceptor for the enzyme in this species is believed to be plastoquinone. Couples the redox reaction to proton translocation, and thus conserves the redox energy in a proton gradient. This is NAD(P)H-quinone oxidoreductase subunit J, chloroplastic from Psilotum nudum (Whisk fern).